Reading from the N-terminus, the 452-residue chain is MEKQYLTVTALTRYIKTKIEYDPHLQSVWLKGEISNFKNHSRGHMYFTLKDENARIAAVMFAGHNRNIKFRPENGMKVLVKGKISVYEASGSYQIYIQDMQPDGIGNLHLAYEQLKVRLEEEGLFSQVYKKTIPPYAKTIGVITSPTGAAIRDIITTIKRRYPIGNVIVFPVLVQGESAAPSIVQAIRTANEMEEIDVLIVGRGGGSIEELWAFNEEMVARAIFKSEIPIISAVGHETDFTIADFVADLRAPTPTAAAELAAPNIIELQEKVLQRTLRLQRAMRELVHKKEEKLQVLQKSYAFRYPRQVYEQKEEQLDRALEQLVLAKERYIDKKVNQLKQLSFYLEKHHPSQKIMQTKVAVETLQKQLQREMQTLLQTKEFAFVRAAQKLEALSPLKVMMRGYGLVYDEEKQVLKSVKDVSLGDAVSVQLQDGILDCSVSGIEERELNNGK.

It belongs to the XseA family. As to quaternary structure, heterooligomer composed of large and small subunits.

It is found in the cytoplasm. It catalyses the reaction Exonucleolytic cleavage in either 5'- to 3'- or 3'- to 5'-direction to yield nucleoside 5'-phosphates.. Bidirectionally degrades single-stranded DNA into large acid-insoluble oligonucleotides, which are then degraded further into small acid-soluble oligonucleotides. The protein is Exodeoxyribonuclease 7 large subunit of Bacillus thuringiensis (strain Al Hakam).